A 383-amino-acid polypeptide reads, in one-letter code: Acetylornithine deacetylase (383 aa).

H80 is a binding site for Zn(2+). D82 is an active-site residue. Position 112 (D112) interacts with Zn(2+). Residue E144 is part of the active site. 3 residues coordinate Zn(2+): E145, E169, and H355.

Belongs to the peptidase M20A family. ArgE subfamily. Homodimer. Zn(2+) serves as cofactor. Co(2+) is required as a cofactor. Requires glutathione as cofactor.

The protein resides in the cytoplasm. It catalyses the reaction N(2)-acetyl-L-ornithine + H2O = L-ornithine + acetate. It functions in the pathway amino-acid biosynthesis; L-arginine biosynthesis; L-ornithine from N(2)-acetyl-L-ornithine (linear): step 1/1. Its function is as follows. Catalyzes the hydrolysis of the amide bond of N(2)-acetylated L-amino acids. Cleaves the acetyl group from N-acetyl-L-ornithine to form L-ornithine, an intermediate in L-arginine biosynthesis pathway, and a branchpoint in the synthesis of polyamines. The polypeptide is Acetylornithine deacetylase (Escherichia coli O139:H28 (strain E24377A / ETEC)).